The following is a 660-amino-acid chain: Putative ATP-dependent RNA helicase Pl10 (660 aa).

The segment covering 1–11 (MSHVAEEDELG) has biased composition (acidic residues). A disordered region spans residues 1 to 117 (MSHVAEEDEL…SRGGRSGFGK (117 aa)). Position 2 is an N-acetylserine (Ser2). The segment covering 12–21 (LDQQLAGLDL) has biased composition (low complexity). Positions 24 to 34 (RDSQSGGSTAS) are enriched in polar residues. Over residues 44 to 66 (RNREAAKAFYDKDGSRWSKDKDA) the composition is skewed to basic and acidic residues. Lys55 carries the post-translational modification N6-acetyllysine. A phosphoserine mark is found at Ser80, Ser84, and Ser89. Positions 93–103 (GRFDERGRSDY) are enriched in basic and acidic residues. The residue at position 100 (Arg100) is an Omega-N-methylarginine. Ser101 carries the phosphoserine modification. Tyr103 is subject to Phosphotyrosine. Arg109 carries the post-translational modification Omega-N-methylarginine. Lys117 is subject to N6-acetyllysine. Residues 179 to 207 (ESFSDVEMGEIIMGNIELTRYTRPTPVQK) carry the Q motif motif. At Ser182 the chain carries Phosphoserine. 199–206 (YTRPTPVQ) contributes to the ATP binding site. Positions 210 to 402 (IPIIKEKRDL…RDFLDEYIFL (193 aa)) constitute a Helicase ATP-binding domain. Residue Lys214 forms a Glycyl lysine isopeptide (Lys-Gly) (interchain with G-Cter in SUMO2) linkage. An ATP-binding site is contributed by 223-230 (AQTGSGKT). Positions 346 to 349 (DEAD) match the DEAD box motif. One can recognise a Helicase C-terminal domain in the interval 413–574 (NITQKVVWVE…EVPSWLENMA (162 aa)). Ser455 bears the Phosphoserine mark. An Omega-N-methylarginine modification is found at Arg590. Ser592, Ser603, and Ser610 each carry phosphoserine. The disordered stretch occupies residues 598 to 632 (RDYRQSSGASSSSFSSGRASNSRSGGGSHGSSRGF). Over residues 602–620 (QSSGASSSSFSSGRASNSR) the composition is skewed to low complexity. Residues Arg615 and Arg630 each carry the omega-N-methylarginine modification. Residues 621-632 (SGGGSHGSSRGF) show a composition bias toward gly residues.

Belongs to the DEAD box helicase family. DDX3/DED1 subfamily. In terms of tissue distribution, testis.

It carries out the reaction ATP + H2O = ADP + phosphate + H(+). Its function is as follows. Putative ATP-dependent RNA helicase. Possible role in a key step of the spermatogenic process. The protein is Putative ATP-dependent RNA helicase Pl10 (D1Pas1) of Mus musculus (Mouse).